A 174-amino-acid chain; its full sequence is Adipose-secreted signaling protein (174 aa).

N-acetylalanine is present on A2. T147 carries the phosphothreonine modification.

It belongs to the ADISSP family.

It localises to the secreted. Functionally, adipocyte-secreted protein (adipokine) that acts as a key regulator for white adipose tissue (WAT) thermogenesis and glucose homeostasis at least in part through activation of protein kinase A (PKA). The polypeptide is Adipose-secreted signaling protein (Homo sapiens (Human)).